Consider the following 550-residue polypeptide: Protein UshA (550 aa).

Positions 1–25 (MKLLQRGVALALLTTFTLASETALA) are cleaved as a signal peptide. Residues aspartate 41, histidine 43, aspartate 84, asparagine 116, histidine 217, histidine 252, and glutamine 254 each coordinate Zn(2+). Cysteine 258 and cysteine 275 are oxidised to a cystine. Substrate is bound by residues 375 to 379 (RDKVR) and 498 to 504 (FNATGGD).

It belongs to the 5'-nucleotidase family. In terms of assembly, monomer. It depends on Zn(2+) as a cofactor.

It is found in the periplasm. The catalysed reaction is UDP-sugar + H2O = UMP + alpha-D-aldose 1-phosphate.. The enzyme catalyses a ribonucleoside 5'-phosphate + H2O = a ribonucleoside + phosphate. The activity of this protein is inhibited by an intracellular protein inhibitor. Its function is as follows. Degradation of external UDP-glucose to uridine monophosphate and glucose-1-phosphate, which can then be used by the cell. The chain is Protein UshA (ushA) from Escherichia coli (strain K12).